Reading from the N-terminus, the 736-residue chain is Replication restart protein PriA (736 aa).

The Helicase ATP-binding domain maps to 230–396 (DFKGNISKEN…KEGRIRTFNF (167 aa)). Position 243–250 (243–250 (GPTGSGKT)) interacts with ATP. Residues 339–342 (DEEH) carry the DEAH box motif. Cys452, Cys455, Cys461, Cys464, Cys479, Cys482, Cys492, and Cys495 together coordinate Zn(2+). One can recognise a Helicase C-terminal domain in the interval 487-643 (GLVESCPRCG…EELERRKALG (157 aa)).

The protein belongs to the helicase family. PriA subfamily. Component of the replication restart primosome. Zn(2+) is required as a cofactor.

It carries out the reaction Couples ATP hydrolysis with the unwinding of duplex DNA by translocating in the 3'-5' direction.. It catalyses the reaction ATP + H2O = ADP + phosphate + H(+). Functionally, initiates the restart of stalled replication forks, which reloads the replicative helicase on sites other than the origin of replication. Recognizes and binds to abandoned replication forks and remodels them to uncover a helicase loading site. Promotes assembly of the primosome at these replication forks. The chain is Replication restart protein PriA from Thermotoga maritima (strain ATCC 43589 / DSM 3109 / JCM 10099 / NBRC 100826 / MSB8).